Here is a 307-residue protein sequence, read N- to C-terminus: Nicotinamide/nicotinic acid mononucleotide adenylyltransferase 2 (307 aa).

NAD(+)-binding residues include serine 16 and phenylalanine 17. Position 24 (histidine 24) interacts with ATP. Residues tryptophan 92, threonine 95, glycine 200, aspartate 202, leucine 212, tryptophan 213, and arginine 232 each coordinate NAD(+). Threonine 271–arginine 274 lines the ATP pocket.

This sequence belongs to the eukaryotic NMN adenylyltransferase family. In terms of assembly, monomer. Requires Mg(2+) as cofactor.

It is found in the golgi apparatus membrane. The protein localises to the cytoplasmic vesicle membrane. The protein resides in the cytoplasm. It localises to the cell projection. Its subcellular location is the axon. The enzyme catalyses beta-nicotinamide D-ribonucleotide + ATP + H(+) = diphosphate + NAD(+). It carries out the reaction nicotinate beta-D-ribonucleotide + ATP + H(+) = deamido-NAD(+) + diphosphate. It participates in cofactor biosynthesis; NAD(+) biosynthesis; NAD(+) from nicotinamide D-ribonucleotide: step 1/1. It functions in the pathway cofactor biosynthesis; NAD(+) biosynthesis; deamido-NAD(+) from nicotinate D-ribonucleotide: step 1/1. Nicotinamide/nicotinate-nucleotide adenylyltransferase that acts as an axon maintenance factor. Axon survival factor required for the maintenance of healthy axons: acts by delaying Wallerian axon degeneration, an evolutionarily conserved process that drives the loss of damaged axons. Catalyzes the formation of NAD(+) from nicotinamide mononucleotide (NMN) and ATP. Can also use the deamidated form; nicotinic acid mononucleotide (NaMN) as substrate but with a lower efficiency. Also catalyzes the reverse reaction, i.e. the pyrophosphorolytic cleavage of NAD(+). For the pyrophosphorolytic activity prefers NAD(+), NADH and NaAD as substrates and degrades nicotinic acid adenine dinucleotide phosphate (NHD) less effectively. Also acts as an activator of ADP-ribosylation by supporting the catalytic activity of PARP16 and promoting mono-ADP-ribosylation of ribosomes by PARP16. May be involved in the maintenance of axonal integrity. The chain is Nicotinamide/nicotinic acid mononucleotide adenylyltransferase 2 (nmnat2) from Xenopus tropicalis (Western clawed frog).